Consider the following 202-residue polypeptide: ATP-dependent Clp protease proteolytic subunit (202 aa).

The active-site Nucleophile is Ser98. Residue His123 is part of the active site.

The protein belongs to the peptidase S14 family. In terms of assembly, fourteen ClpP subunits assemble into 2 heptameric rings which stack back to back to give a disk-like structure with a central cavity, resembling the structure of eukaryotic proteasomes.

Its subcellular location is the cytoplasm. It carries out the reaction Hydrolysis of proteins to small peptides in the presence of ATP and magnesium. alpha-casein is the usual test substrate. In the absence of ATP, only oligopeptides shorter than five residues are hydrolyzed (such as succinyl-Leu-Tyr-|-NHMec, and Leu-Tyr-Leu-|-Tyr-Trp, in which cleavage of the -Tyr-|-Leu- and -Tyr-|-Trp bonds also occurs).. Its function is as follows. Cleaves peptides in various proteins in a process that requires ATP hydrolysis. Has a chymotrypsin-like activity. Plays a major role in the degradation of misfolded proteins. This chain is ATP-dependent Clp protease proteolytic subunit, found in Desulfovibrio desulfuricans (strain ATCC 27774 / DSM 6949 / MB).